The sequence spans 308 residues: Uricase-2 isozyme 1 (308 aa).

Residues lysine 17 and threonine 63 each act as charge relay system in the active site. Positions 63, 64, 165, 182, 237, 238, and 264 each coordinate urate. Histidine 266 acts as the Charge relay system in catalysis. The short motif at 306-308 (SKL) is the Microbody targeting signal element.

Belongs to the uricase family.

It is found in the peroxisome. The catalysed reaction is urate + O2 + H2O = 5-hydroxyisourate + H2O2. It functions in the pathway purine metabolism; urate degradation; (S)-allantoin from urate: step 1/3. Functionally, catalyzes the oxidation of uric acid to 5-hydroxyisourate, which is further processed to form (S)-allantoin. In Canavalia lineata (Beach bean), this protein is Uricase-2 isozyme 1.